The following is a 285-amino-acid chain: Probable endonuclease 4 (285 aa).

Residues H69, H109, E145, D179, H182, H216, D229, H231, and E261 each coordinate Zn(2+).

Belongs to the AP endonuclease 2 family. It depends on Zn(2+) as a cofactor.

It catalyses the reaction Endonucleolytic cleavage to 5'-phosphooligonucleotide end-products.. In terms of biological role, endonuclease IV plays a role in DNA repair. It cleaves phosphodiester bonds at apurinic or apyrimidinic (AP) sites, generating a 3'-hydroxyl group and a 5'-terminal sugar phosphate. This chain is Probable endonuclease 4, found in Yersinia pseudotuberculosis serotype O:1b (strain IP 31758).